The following is a 318-amino-acid chain: Petal death protein (318 aa).

Positions M1–P3 are cleaved as a propeptide — removed in mature form. Residues M1–S24 are disordered. The Mg(2+) site is built by D107, D109, and K142.

Belongs to the isocitrate lyase/PEP mutase superfamily. Homodimer and homotetramer formed by a dimer of homodimer. Mg(2+) is required as a cofactor. The cofactor is Mn(2+). Fe(2+) serves as cofactor. It depends on Co(2+) as a cofactor. In terms of tissue distribution, accumulates in senescing flower petals.

The enzyme catalyses oxaloacetate + H2O = oxalate + acetate + H(+). In terms of biological role, catalyzes cleavage of the C(2)-C(3) bond in oxaloacetate and in (2R)-alkyl malate derivatives to form oxalate and acetate, and alkyl carboxylates and R-ketocarboxylates, respectively. This is Petal death protein from Dianthus caryophyllus (Carnation).